A 288-amino-acid chain; its full sequence is ATP synthase gamma chain (288 aa).

Belongs to the ATPase gamma chain family. F-type ATPases have 2 components, CF(1) - the catalytic core - and CF(0) - the membrane proton channel. CF(1) has five subunits: alpha(3), beta(3), gamma(1), delta(1), epsilon(1). CF(0) has three main subunits: a, b and c.

The protein resides in the cell inner membrane. In terms of biological role, produces ATP from ADP in the presence of a proton gradient across the membrane. The gamma chain is believed to be important in regulating ATPase activity and the flow of protons through the CF(0) complex. The chain is ATP synthase gamma chain from Acidithiobacillus ferrooxidans (strain ATCC 23270 / DSM 14882 / CIP 104768 / NCIMB 8455) (Ferrobacillus ferrooxidans (strain ATCC 23270)).